A 340-amino-acid polypeptide reads, in one-letter code: GTP 3',8-cyclase (340 aa).

The region spanning 20-246 (RFQRQYTYLR…PKAVNDGPAK (227 aa)) is the Radical SAM core domain. R29 lines the GTP pocket. [4Fe-4S] cluster contacts are provided by C36 and C40. Y42 serves as a coordination point for S-adenosyl-L-methionine. C43 contacts [4Fe-4S] cluster. Position 79 (R79) interacts with GTP. An S-adenosyl-L-methionine-binding site is contributed by G83. Residue T110 coordinates GTP. S134 is an S-adenosyl-L-methionine binding site. K171 is a GTP binding site. M205 contacts S-adenosyl-L-methionine. C268 and C271 together coordinate [4Fe-4S] cluster. 273–275 (RLR) contributes to the GTP binding site. C285 contacts [4Fe-4S] cluster.

It belongs to the radical SAM superfamily. MoaA family. As to quaternary structure, monomer and homodimer. It depends on [4Fe-4S] cluster as a cofactor.

It carries out the reaction GTP + AH2 + S-adenosyl-L-methionine = (8S)-3',8-cyclo-7,8-dihydroguanosine 5'-triphosphate + 5'-deoxyadenosine + L-methionine + A + H(+). Its pathway is cofactor biosynthesis; molybdopterin biosynthesis. Catalyzes the cyclization of GTP to (8S)-3',8-cyclo-7,8-dihydroguanosine 5'-triphosphate. In Haemophilus ducreyi (strain 35000HP / ATCC 700724), this protein is GTP 3',8-cyclase.